Reading from the N-terminus, the 303-residue chain is Trans-aconitate 2-methyltransferase (303 aa).

Residues 271–303 (EGSGGSGGSGGSAGSAGCAGSGGSVGPAGEAGR) form a disordered region. Over residues 272–303 (GSGGSGGSGGSAGSAGCAGSGGSVGPAGEAGR) the composition is skewed to gly residues.

It belongs to the methyltransferase superfamily. Tam family.

The protein resides in the cytoplasm. It catalyses the reaction trans-aconitate + S-adenosyl-L-methionine = (E)-3-(methoxycarbonyl)pent-2-enedioate + S-adenosyl-L-homocysteine. Functionally, catalyzes the S-adenosylmethionine monomethyl esterification of trans-aconitate. The polypeptide is Trans-aconitate 2-methyltransferase (Streptomyces coelicolor (strain ATCC BAA-471 / A3(2) / M145)).